The chain runs to 533 residues: CTP synthase (533 aa).

Positions 1 to 268 (MGETKYIFVT…DETILQKMGL (268 aa)) are amidoligase domain. Ser-15 lines the CTP pocket. Residue Ser-15 participates in UTP binding. 16-21 (SLGKGI) lines the ATP pocket. Tyr-56 lines the L-glutamine pocket. Asp-73 is an ATP binding site. The Mg(2+) site is built by Asp-73 and Glu-143. CTP-binding positions include 150–152 (DIE), 189–194 (KTKPTQ), and Lys-225. UTP is bound by residues 189–194 (KTKPTQ) and Lys-225. The 233-residue stretch at 301-533 (YVELQDAYKS…VSFIKAAIDK (233 aa)) folds into the Glutamine amidotransferase type-1 domain. An L-glutamine-binding site is contributed by Gly-356. Cys-383 (nucleophile; for glutamine hydrolysis) is an active-site residue. Residues 384 to 387 (LGMQ), Glu-407, and Arg-464 contribute to the L-glutamine site. Active-site residues include His-509 and Glu-511.

The protein belongs to the CTP synthase family. Homotetramer.

The enzyme catalyses UTP + L-glutamine + ATP + H2O = CTP + L-glutamate + ADP + phosphate + 2 H(+). The catalysed reaction is L-glutamine + H2O = L-glutamate + NH4(+). It carries out the reaction UTP + NH4(+) + ATP = CTP + ADP + phosphate + 2 H(+). The protein operates within pyrimidine metabolism; CTP biosynthesis via de novo pathway; CTP from UDP: step 2/2. Allosterically activated by GTP, when glutamine is the substrate; GTP has no effect on the reaction when ammonia is the substrate. The allosteric effector GTP functions by stabilizing the protein conformation that binds the tetrahedral intermediate(s) formed during glutamine hydrolysis. Inhibited by the product CTP, via allosteric rather than competitive inhibition. Catalyzes the ATP-dependent amination of UTP to CTP with either L-glutamine or ammonia as the source of nitrogen. Regulates intracellular CTP levels through interactions with the four ribonucleotide triphosphates. The chain is CTP synthase from Bacteroides fragilis (strain YCH46).